Reading from the N-terminus, the 212-residue chain is 2-C-methyl-D-erythritol 4-phosphate cytidylyltransferase (212 aa).

Belongs to the IspD/TarI cytidylyltransferase family. IspD subfamily.

It carries out the reaction 2-C-methyl-D-erythritol 4-phosphate + CTP + H(+) = 4-CDP-2-C-methyl-D-erythritol + diphosphate. Its pathway is isoprenoid biosynthesis; isopentenyl diphosphate biosynthesis via DXP pathway; isopentenyl diphosphate from 1-deoxy-D-xylulose 5-phosphate: step 2/6. Catalyzes the formation of 4-diphosphocytidyl-2-C-methyl-D-erythritol from CTP and 2-C-methyl-D-erythritol 4-phosphate (MEP). The sequence is that of 2-C-methyl-D-erythritol 4-phosphate cytidylyltransferase from Chlamydia felis (strain Fe/C-56) (Chlamydophila felis).